We begin with the raw amino-acid sequence, 558 residues long: Vanin-like protein 1 (558 aa).

The signal sequence occupies residues 1–22 (MSNTWWWLSVVLLILGLMPGMS). The 267-residue stretch at 33 to 299 (YTAGVVEFKQ…RAIYVAQVPK (267 aa)) folds into the CN hydrolase domain. N65 is a glycosylation site (N-linked (GlcNAc...) asparagine). The active-site Proton acceptor is E76. 3 N-linked (GlcNAc...) asparagine glycosylation sites follow: N103, N120, and N128. The active-site Proton donor is the K171. Residue N180 is glycosylated (N-linked (GlcNAc...) asparagine). C203 (nucleophile) is an active-site residue. N354 and N379 each carry an N-linked (GlcNAc...) asparagine glycan. Residue S531 is the site of GPI-anchor amidated serine attachment. Residues 532-558 (GSPGLRILGGWLAMPLIILAIARTMSS) constitute a propeptide, removed in mature form.

The protein belongs to the carbon-nitrogen hydrolase superfamily. BTD/VNN family. As to expression, expressed in larvae and early pupae. Expressed in third instar larvae.

The protein resides in the cell membrane. The sequence is that of Vanin-like protein 1 from Drosophila melanogaster (Fruit fly).